The sequence spans 283 residues: Cyclic AMP-dependent transcription factor ATF-5 (283 aa).

The segment at 1–21 (MSLLATLGLELDRALLPASGL) is required for protein stabilization induced by IL1B. Residue lysine 29 is modified to N6-acetyllysine; by EP300. 2 disordered regions span residues 118–154 (DAPL…PQPP) and 168–241 (SEAG…EGEC). The segment at 119–218 (APLLPPPSPP…GDRKQKKRDQ (100 aa)) is interaction with PTP4A1. 2 stretches are compositionally biased toward pro residues: residues 121-145 (LLPP…PLPL) and 183-203 (PQQP…PYPS). The region spanning 209 to 272 (GDRKQKKRDQ…QYVKDLLIEV (64 aa)) is the bZIP domain. The segment at 211–231 (RKQKKRDQNKSAALRYRQRKR) is basic motif. Residues 237 to 251 (LEGECQGLEARNREL) are leucine-zipper. The residue at position 257 (serine 257) is a Phosphoserine.

The protein belongs to the bZIP family. Binds DNA as a dimer. Interacts with PTP4A1/PRL-1. Interacts with CCND3, but not with CCND1 or CCND2. Interacts with HSPA1A or HSPA1B; the interaction protects ATF5 from degradation via proteasome-dependent and caspase-dependent processes. Interacts (via C-terminal region) with NPM1 (via C-terminal region); the interaction leads to loss of association between HSPA1A or HSPA1B and ATF5 and promotes ATF5 degradation via proteasome-dependent and caspase-dependent processes. Interacts with NLK; the interaction stabilizes ATF5 at the protein level in a kinase-independent manner. Interacts with alpha-tubulin, gamma-tubulin members TUBGCP2 and TUBGCP4, PCNT; the ATF5:PCNT:polyglutamylated tubulin (PGT) tripartite unites the mother centriole and the pericentriolar material (PCM) in the centrosome. Interacts with CEBPB and EP300; EP300 is required for ATF5 and CEBPB interaction and DNA binding. Post-translationally, acetylated at Lys-29 by EP300, the acetylation enhances the interaction with CEBPB, DNA-binding and transactivation activity. Ubiquitinated by CDC34 and UBE2B in order to be degraded by the proteasome. Cisplatin inhibits ubiquitination and proteasome-mediated degradation by inhibiting the interaction with CDC34. Ubiquitination and degradation by the proteasome are inhibited by NLK in a kinase-independent manner. In terms of processing, phosphorylated by NLK, probably at Ser-92 and Ser-126. Highly expressed in liver and at lower levels in heart, brain, lung, kidney, adipose tissue, and skeletal muscle. Expressed in some immature and in all mature olfactory sensory neurons (at protein level).

It is found in the cytoplasm. The protein localises to the nucleus. The protein resides in the cytoskeleton. It localises to the microtubule organizing center. Its subcellular location is the centrosome. Functionally, transcription factor that either stimulates or represses gene transcription through binding of different DNA regulatory elements such as cAMP response element (CRE) (consensus: 5'-GTGACGT[AC][AG]-3'), ATF5-specific response element (ARE) (consensus: 5'-C[CT]TCT[CT]CCTT[AT]-3') but also the amino acid response element (AARE), present in many viral and cellular promoters. Critically involved, often in a cell type-dependent manner, in cell survival, proliferation, and differentiation. Its transcriptional activity is enhanced by CCND3 and slightly inhibited by CDK4. Important regulator of the cerebral cortex formation, functions in cerebral cortical neuroprogenitor cells to maintain proliferation and to block differentiation into neurons. Must be down-regulated in order for such cells to exit the cycle and differentiate. Participates in the pathways by which SHH promotes cerebellar granule neuron progenitor cells proliferation. Critical for survival of mature olfactory sensory neurons (OSN), directs expression of OSN-specific genes. May be involved in osteogenic differentiation. Promotes cell proliferation and survival by inducing the expression of EGR1 sinergistically with ELK1. Once acetylated by EP300, binds to ARE sequences on target genes promoters, such as BCL2 and EGR1. Plays an anti-apoptotic role through the transcriptional regulation of BCL2, this function seems to be cell type-dependent. Cooperates with NR1I3/CAR in the transcriptional activation of CYP2B6 in liver. In hepatic cells, represses CRE-dependent transcription and inhibits proliferation by blocking at G2/M phase. May act as a negative regulator of IL1B transduction pathway in liver. Upon IL1B stimulus, cooperates with NLK to activate the transactivation activity of C/EBP subfamily members. Besides its function of transcription factor, acts as a cofactor of CEBPB to activate CEBPA and promote adipocyte differentiation. Regulates centrosome dynamics in a cell-cycle- and centriole-age-dependent manner. Forms 9-foci symmetrical ring scaffold around the mother centriole to control centrosome function and the interaction between centrioles and pericentriolar material. This chain is Cyclic AMP-dependent transcription factor ATF-5 (Atf5), found in Mus musculus (Mouse).